The sequence spans 167 residues: Iron-sulfur cluster assembly enzyme ISCU (167 aa).

Residues Met1–Leu34 constitute a mitochondrion transit peptide. Residue Ser14 is modified to Phosphoserine; by MTOR. Pro46 provides a ligand contact to Zn(2+). Catalysis depends on Cys69, which acts as the Cysteine persulfide intermediate. At Cys69 the chain carries Cysteine persulfide. Gly70, Asp71, Cys95, Lys112, and Cys138 together coordinate Zn(2+). The Cysteine persulfide intermediate role is filled by Cys138. Cysteine persulfide is present on Cys138.

It belongs to the NifU family. Homodimer; Tyr-35-mediated dimerization of two iron- and sulfide-containing ISCU subunit bind to the cysteine desulfurase complex. Component of the mitochondrial core iron-sulfur cluster (ISC) complex composed of NFS1, LYRM4, NDUFAB1, ISCU, FXN, and FDX2; this complex is an heterohexamer containing two copies of each monomer. Interacts (D-state) with NFS1 (homodimer form); each monomer interacts with the C-terminal regions of each NFS1 monomer. Interacts (monomer form) with FXN (via ferrous form); the interaction is possible when both are bound to the dimeric form of the cysteine desulfurase complex (NFS1:LYRM4) and enhances FXN interaction to the dimeric form of the cysteine desulfurase complex (NFS1:LYRM4). Interacts with GLRX5. Interacts (D-state) with HSPA9. Interacts (S-state) with HSCB; this interaction stimulates the ATPase activity of HSPA9. As to quaternary structure, component of the cytoplasmic core iron-sulfur cluster (ISC) complex composed at least of NFS1, LYRM4, and ISCU; this complex interacts with FXN. Monomer; each monomer binds to the C-terminal regions of NFS1 (cytoplasmic and homodimer form). Interacts with NFS1 (cytoplasmic and homodimer form); this interaction promotes de novo iron-sulfur cluster formation. Interacts with HSCB (cytoplasmic form); this interaction stabilizes the (Fe-S) clusters on ISCU. In terms of processing, phosphorylation at Ser-14 is required for ISCU protein stabilization in the cytosol, whereas dephosphorylation of Ser-14, due to the inhibition of mTORC1 (mammalian target of rapamycin complex 1) complex, leads to degradation of the precursor form and ultimately to a decrease in the mitochondrial mature form. Post-translationally, cysteine persulfide is reduced by thiol-containing molecules such as glutathione and L-cysteine. As to expression, detected in heart, liver, skeletal muscle, brain, pancreas, kidney, lung and placenta.

It is found in the mitochondrion. It localises to the cytoplasm. The protein localises to the nucleus. Functionally, mitochondrial scaffold protein, of the core iron-sulfur cluster (ISC) assembly complex, that provides the structural architecture on which the [2Fe-2S] clusters are assembled. The core iron-sulfur cluster (ISC) assembly complex is involved in the de novo synthesis of a [2Fe-2S] cluster, the first step of the mitochondrial iron-sulfur protein biogenesis. This process is initiated by the cysteine desulfurase complex (NFS1:LYRM4:NDUFAB1) that produces persulfide which is delivered on the scaffold protein ISCU in a FXN-dependent manner. Then this complex is stabilized by FDX2 which provides reducing equivalents to accomplish the [2Fe-2S] cluster assembly. Finally, the [2Fe-2S] cluster is transferred from ISCU to chaperone proteins, including HSCB, HSPA9 and GLRX5. Exists as two slow interchanging conformational states, a structured (S) and disordered (D) form. May modulate NFS1 desulfurase activity in a zinc-dependent manner. Modulates the interaction between FXN and the cysteine desulfurase complex. Cytoplasmic scaffold protein, of the cytoplasmic core iron-sulfur cluster (ISC) assembly complex that provides the structural architecture on which the Fe-S clusters are assembled and may be involved in the cytoplasmic iron-sulfur protein biogenesis. This Homo sapiens (Human) protein is Iron-sulfur cluster assembly enzyme ISCU.